The sequence spans 133 residues: ATP synthase epsilon chain, chloroplastic (133 aa).

This sequence belongs to the ATPase epsilon chain family. As to quaternary structure, F-type ATPases have 2 components, CF(1) - the catalytic core - and CF(0) - the membrane proton channel. CF(1) has five subunits: alpha(3), beta(3), gamma(1), delta(1), epsilon(1). CF(0) has three main subunits: a, b and c.

The protein localises to the plastid. It localises to the chloroplast thylakoid membrane. Its function is as follows. Produces ATP from ADP in the presence of a proton gradient across the membrane. The chain is ATP synthase epsilon chain, chloroplastic from Ipomoea batatas (Sweet potato).